A 102-amino-acid polypeptide reads, in one-letter code: Large ribosomal subunit protein bL21 (102 aa).

Belongs to the bacterial ribosomal protein bL21 family. As to quaternary structure, part of the 50S ribosomal subunit. Contacts protein L20.

In terms of biological role, this protein binds to 23S rRNA in the presence of protein L20. The polypeptide is Large ribosomal subunit protein bL21 (Arthrobacter sp. (strain FB24)).